The sequence spans 93 residues: MASRCRSLSKPAFSAFRSAMNKPSIRPKSASSFIGVPPSPGFSRPIGQLGSLQSLLPLYSAVASARLTSCLGIDSQNSRSLAQGMLCSANPGV.

The transit peptide at 1–27 directs the protein to the mitochondrion; sequence MASRCRSLSKPAFSAFRSAMNKPSIRP.

Expressed in cotyledons, roots and flowers.

It is found in the mitochondrion. Functionally, essential for mitochondrial morphology, functionality and distribution. Contributes to 9-lipoxygenase (9-LOX)-derived oxylipin synthesis, but not to brassinosteroids (BRs) signaling. Required for waving-inducing oxylipin 9-hydroxyoctadecatrienoic acid and derivatives (e.g. 9-HOT, 2-HOE, 13-HOT, 13-HOD, 13-KOD, 12,13-KHOD, 9-HOT, 9-HOD, 9-KOT, 9-KOD and 9,10-KHOE)-mediated root development regulation, including callose deposition, root waving and lateral roots formation. Involved in basal plant defense toward pathogenic bacteria (e.g. Pseudomonas syringae pv tomato), both in compatible (e.g. Pst DC3000) and incompatible (e.g. Pst DC3000 avrRPM1) interactions, as well as against obligate biotrophic pathogenic fungi (e.g. Golovinomyces cichoracearum), probably via the promotion of callose deposition in the cell wall. Confers sensitivity to the herbicide isoxaben, a herbicide inhibiting cellulose synthesis and altering the cell wall. This chain is Protein NONRESPONDING TO OXYLIPINS 2, mitochondrial, found in Arabidopsis thaliana (Mouse-ear cress).